A 920-amino-acid chain; its full sequence is Chitin synthase C (920 aa).

Disordered stretches follow at residues Met-1–Gln-41 and Ile-140–Pro-173. Over residues Tyr-154–Gln-163 the composition is skewed to acidic residues. Helical transmembrane passes span Ser-466–Leu-486, Arg-564–Trp-584, Leu-608–Leu-628, Val-640–Ala-660, and Met-675–Val-695. Residue Asn-715 is glycosylated (N-linked (GlcNAc...) asparagine). 4 helical membrane-spanning segments follow: residues Phe-718 to Ile-738, Phe-749 to Cys-769, Ala-847 to Ala-867, and Val-892 to Leu-912.

It belongs to the chitin synthase family. Class I subfamily.

The protein localises to the cell membrane. It catalyses the reaction [(1-&gt;4)-N-acetyl-beta-D-glucosaminyl](n) + UDP-N-acetyl-alpha-D-glucosamine = [(1-&gt;4)-N-acetyl-beta-D-glucosaminyl](n+1) + UDP + H(+). Its function is as follows. Polymerizes chitin, a structural polymer of the cell wall and septum, by transferring the sugar moiety of UDP-GlcNAc to the non-reducing end of the growing chitin polymer. Involved in hyphal growth. This is Chitin synthase C from Aspergillus oryzae (strain ATCC 42149 / RIB 40) (Yellow koji mold).